We begin with the raw amino-acid sequence, 576 residues long: Putative export ATP-binding/permease protein RP696 (576 aa).

The ABC transmembrane type-1 domain occupies 20–303 (LIIVMISLLS…IFELLSEMHL (284 aa)). 6 consecutive transmembrane segments (helical) span residues 21 to 41 (IIVM…GSIF), 61 to 81 (ILYI…RSYF), 135 to 155 (FLSF…LMFF), 158 to 178 (FKLA…LIKF), 242 to 262 (ALFF…IVWI), and 277 to 297 (IISF…IFEL). The ABC transporter domain maps to 336–572 (IEFKNVDFTY…SEIYRNICRE (237 aa)). An ATP-binding site is contributed by 371–378 (GRSGAGKS).

The protein belongs to the ABC transporter superfamily. As to quaternary structure, homodimer.

It localises to the cell inner membrane. Its function is as follows. Part of an ABC transporter complex. Transmembrane domains (TMD) form a pore in the inner membrane and the ATP-binding domain (NBD) is responsible for energy generation. In Rickettsia prowazekii (strain Madrid E), this protein is Putative export ATP-binding/permease protein RP696.